The chain runs to 2139 residues: U5 small nuclear ribonucleoprotein 200 kDa helicase (2139 aa).

A phosphoserine mark is found at Ser-17 and Ser-26. Positions 39-80 (EVLSLVGKLEGTRMGDKAQRTKPQMQEERRAKRRKRDEDRHD) are disordered. Lys-46 is covalently cross-linked (Glycyl lysine isopeptide (Lys-Gly) (interchain with G-Cter in SUMO2)). Residues 48 to 80 (EGTRMGDKAQRTKPQMQEERRAKRRKRDEDRHD) are compositionally biased toward basic and acidic residues. Positions 54–84 (DKAQRTKPQMQEERRAKRRKRDEDRHDINKM) form a coiled coil. Ser-225 carries the phosphoserine modification. Thr-389 is subject to Phosphothreonine. An interaction with C9orf78 and WBP4 region spans residues 395–2132 (DLDQGGEALA…YKFSVDVKEA (1738 aa)). One can recognise a Helicase ATP-binding 1 domain in the interval 490-673 (RAALETDENL…FLRVDPAKGL (184 aa)). Position 503–510 (503–510 (APTGAGKT)) interacts with ATP. Positions 615–618 (DEIH) match the DEAH box motif. The Helicase C-terminal 1 domain maps to 684–921 (PLEQTYVGIT…NAKDAVNWLG (238 aa)). Tyr-709 is modified (phosphotyrosine). Residue Lys-944 forms a Glycyl lysine isopeptide (Lys-Gly) (interchain with G-Cter in SUMO) linkage. Lys-971 carries the post-translational modification N6-acetyllysine; alternate. Lys-971 participates in a covalent cross-link: Glycyl lysine isopeptide (Lys-Gly) (interchain with G-Cter in SUMO); alternate. Residues 982-1289 (TELGRIASHY…SCETQLPVSF (308 aa)) form the SEC63 1 domain. Residues Lys-1071 and Lys-1199 each participate in a glycyl lysine isopeptide (Lys-Gly) (interchain with G-Cter in SUMO) cross-link. Positions 1285-2139 (LPVSFRHLIL…KEAETDSDSD (855 aa)) are interaction with TSSC4. Residues 1340-1515 (NTVYNSDDNV…WLGCSATSTF (176 aa)) form the Helicase ATP-binding 2 domain. Residue 1353–1360 (APTGSGKT) participates in ATP binding. Position 1431 is a phosphothreonine (Thr-1431). A DEAH box motif is present at residues 1457 to 1460 (DEVH). Residues 1548 to 1756 (PVYHAITKHS…TIENKQDAVD (209 aa)) form the Helicase C-terminal 2 domain. Thr-1768 carries the post-translational modification Phosphothreonine. An SEC63 2 domain is found at 1815 to 2127 (PLNLGMIAAY…GCDQEYKFSV (313 aa)). A Phosphoserine modification is found at Ser-2005. Residue Lys-2094 forms a Glycyl lysine isopeptide (Lys-Gly) (interchain with G-Cter in SUMO) linkage. Position 2134 is a phosphothreonine (Thr-2134). Phosphoserine is present on residues Ser-2136 and Ser-2138.

This sequence belongs to the helicase family. SKI2 subfamily. Component of a core complex containing at least PRPF8, SNRNP200, EFTUD2 and SNRNP40. Component of the U5 snRNP and U4/U6-U5 tri-snRNP complexes, building blocks of the spliceosome. Component of the U4/U6-U5 tri-snRNP complex composed of the U4, U6 and U5 snRNAs and at least PRPF3, PRPF4, PRPF6, PRPF8, PRPF31, SNRNP200, TXNL4A, SNRNP40, DDX23, CD2BP2, PPIH, SNU13, EFTUD2, SART1 and USP39. Component of precatalytic, catalytic and postcatalytic spliceosomal complexes. Component of the minor spliceosome, which splices U12-type introns. Interacts with C9orf78; the interaction is direct and mutually exclusive with its interaction with WBP4. Interacts with WBP4; the interaction is mutually exclusive with its interaction with C9orf78. Interacts with PRPF8. Interacts with TSSC4; the interaction is direct, excludes recruitment of C9ORF78 and WBP4 to SNRNP200 and negatively regulates its RNA helicase activity.

It is found in the nucleus. The enzyme catalyses ATP + H2O = ADP + phosphate + H(+). Its function is as follows. Catalyzes the ATP-dependent unwinding of U4/U6 RNA duplices, an essential step in the assembly of a catalytically active spliceosome. Plays a role in pre-mRNA splicing as core component of precatalytic, catalytic and postcatalytic spliceosomal complexes. As a component of the minor spliceosome, involved in the splicing of U12-type introns in pre-mRNAs. Involved in spliceosome assembly, activation and disassembly. Mediates changes in the dynamic network of RNA-RNA interactions in the spliceosome. This is U5 small nuclear ribonucleoprotein 200 kDa helicase (Snrnp200) from Rattus norvegicus (Rat).